Reading from the N-terminus, the 186-residue chain is Signal peptidase complex catalytic subunit SEC11 (186 aa).

The Cytoplasmic portion of the chain corresponds to 1–20 (MDALGLSKLRHLKPRQLLSQ). Residues 21–41 (VLNFALILSTAFMLWKGLSVA) traverse the membrane as a helical; Signal-anchor for type II membrane protein segment. At 42–186 (TDSPSPIVVV…MGLLVIVQRE (145 aa)) the chain is on the lumenal side. Residues Ser-55, His-102, and Asp-128 each act as charge relay system in the active site. The tract at residues 172-183 (ALLGIMGLLVIV) is C-terminal short (CTS) helix.

It belongs to the peptidase S26B family. In terms of assembly, component of the signal peptidase complex (SPC) composed of a catalytic subunit SEC11 and three accessory subunits SPC1, SPC2 and SPC3. The complex induces a local thinning of the ER membrane which is used to measure the length of the signal peptide (SP) h-region of protein substrates. This ensures the selectivity of the complex towards h-regions shorter than 18-20 amino acids. SPC associates with the translocon complex.

The protein resides in the endoplasmic reticulum membrane. The catalysed reaction is Cleavage of hydrophobic, N-terminal signal or leader sequences from secreted and periplasmic proteins.. Functionally, catalytic component of the signal peptidase complex (SPC) which catalyzes the cleavage of N-terminal signal sequences from nascent proteins as they are translocated into the lumen of the endoplasmic reticulum. Specifically cleaves N-terminal signal peptides that contain a hydrophobic alpha-helix (h-region) shorter than 18-20 amino acids. This Tuber melanosporum (strain Mel28) (Perigord black truffle) protein is Signal peptidase complex catalytic subunit SEC11 (SEC11).